The following is a 1268-amino-acid chain: Protein transport protein Sec24B (1268 aa).

2 stretches are compositionally biased toward low complexity: residues 1–14 (MSAPAGSSHPAASA) and 21–48 (GGAAVSGAAAPAGPGAGPAPHQQNGPAQ). 4 disordered regions span residues 1–71 (MSAP…SGHY), 216–263 (APTV…LTWS), 303–345 (QNVQ…SVTQ), and 362–451 (NNQA…VVPQ). An N-acetylserine modification is found at S2. At S55 the chain carries Phosphoserine. Over residues 225-234 (NSFSGQNTAI) the composition is skewed to polar residues. Low complexity-rich tracts occupy residues 245–255 (SQQHHQQQSLS), 311–332 (SPVVSTVLSGSSGSSSTRTPPT), and 365–375 (ASSAPTPLSST). T329 is subject to Phosphothreonine. Residues 376 to 389 (SDDEEEEEEDEEAG) show a composition bias toward acidic residues. Over residues 426–450 (APDPAPEPDPASAPAPASAPAPVVP) the composition is skewed to pro residues. C605, C608, C626, and C629 together coordinate Zn(2+). Positions 605-629 (CRSCRTYINPFVSFIDQRRWKCNLC) are zinc finger-like. The Gelsolin-like repeat unit spans residues 1141 to 1213 (PQPPLQKLSA…TLSSERARSF (73 aa)). At S1224 the chain carries Phosphoserine.

The protein belongs to the SEC23/SEC24 family. SEC24 subfamily. In terms of assembly, COPII is composed of at least five proteins: the Sec23/24 complex, the Sec13/31 complex and SAR1. Interacts with STING1; promoting STING1 translocation to COPII vesicles in a STEEP1-dependent manner. Interacts with RNF139. Interacts with TMED2 and TMED10. Interacts with CNIH4.

The protein resides in the cytoplasmic vesicle. It localises to the COPII-coated vesicle membrane. It is found in the endoplasmic reticulum membrane. Its subcellular location is the cytoplasm. The protein localises to the cytosol. Component of the coat protein complex II (COPII) which promotes the formation of transport vesicles from the endoplasmic reticulum (ER). The coat has two main functions, the physical deformation of the endoplasmic reticulum membrane into vesicles and the selection of cargo molecules for their transport to the Golgi complex. Plays a central role in cargo selection within the COPII complex and together with SEC24A may have a different specificity compared to SEC24C and SEC24D. May package preferentially cargos with cytoplasmic DxE or LxxLE motifs and may also recognize conformational epitopes. This Homo sapiens (Human) protein is Protein transport protein Sec24B.